A 143-amino-acid polypeptide reads, in one-letter code: Large ribosomal subunit protein uL15 (143 aa).

Residues 1–45 are disordered; sequence MLLNTVQPGVGAKHAKRRVGRGIGSGLGKTCGRGHKGQKSRAGGF. Over residues 21 to 31 the composition is skewed to gly residues; sequence RGIGSGLGKTC.

This sequence belongs to the universal ribosomal protein uL15 family. In terms of assembly, part of the 50S ribosomal subunit.

Binds to the 23S rRNA. The chain is Large ribosomal subunit protein uL15 from Chromobacterium violaceum (strain ATCC 12472 / DSM 30191 / JCM 1249 / CCUG 213 / NBRC 12614 / NCIMB 9131 / NCTC 9757 / MK).